A 178-amino-acid polypeptide reads, in one-letter code: Single-stranded DNA-binding protein 2 (178 aa).

Residues 6-111 enclose the SSB domain; the sequence is VNKVILVGNL…VVVSQSGTMQ (106 aa). The DNA-binding element occupies 55–61; that stretch reads WHRVVLY. Residues 111 to 161 are disordered; that stretch reads QMLGGRNSAGSGQQQGGWGQPQQPAAPSHSGMPPQQHPANEPPMDFDDDIP.

Homotetramer.

In Salmonella typhi, this protein is Single-stranded DNA-binding protein 2 (ssb2).